The following is a 335-amino-acid chain: N-acetyl-gamma-glutamyl-phosphate reductase (335 aa).

The active site involves Cys-147.

This sequence belongs to the NAGSA dehydrogenase family. Type 1 subfamily.

The protein localises to the cytoplasm. It carries out the reaction N-acetyl-L-glutamate 5-semialdehyde + phosphate + NADP(+) = N-acetyl-L-glutamyl 5-phosphate + NADPH + H(+). It participates in amino-acid biosynthesis; L-arginine biosynthesis; N(2)-acetyl-L-ornithine from L-glutamate: step 3/4. Its function is as follows. Catalyzes the NADPH-dependent reduction of N-acetyl-5-glutamyl phosphate to yield N-acetyl-L-glutamate 5-semialdehyde. This chain is N-acetyl-gamma-glutamyl-phosphate reductase, found in Sulfurovum sp. (strain NBC37-1).